The chain runs to 211 residues: tRNA (guanine-N(7)-)-methyltransferase (211 aa).

4 residues coordinate S-adenosyl-L-methionine: aspartate 40, glutamate 65, asparagine 92, and aspartate 118. Residue aspartate 118 is part of the active site. Substrate contacts are provided by lysine 122 and aspartate 154.

This sequence belongs to the class I-like SAM-binding methyltransferase superfamily. TrmB family.

It catalyses the reaction guanosine(46) in tRNA + S-adenosyl-L-methionine = N(7)-methylguanosine(46) in tRNA + S-adenosyl-L-homocysteine. Its pathway is tRNA modification; N(7)-methylguanine-tRNA biosynthesis. In terms of biological role, catalyzes the formation of N(7)-methylguanine at position 46 (m7G46) in tRNA. This is tRNA (guanine-N(7)-)-methyltransferase from Microcystis aeruginosa (strain NIES-843 / IAM M-2473).